Consider the following 177-residue polypeptide: Translation initiation factor IF-3 (177 aa).

It belongs to the IF-3 family. As to quaternary structure, monomer.

It localises to the cytoplasm. Its function is as follows. IF-3 binds to the 30S ribosomal subunit and shifts the equilibrium between 70S ribosomes and their 50S and 30S subunits in favor of the free subunits, thus enhancing the availability of 30S subunits on which protein synthesis initiation begins. The chain is Translation initiation factor IF-3 from Acaryochloris marina (strain MBIC 11017).